A 272-amino-acid chain; its full sequence is 4-hydroxy-tetrahydrodipicolinate reductase (272 aa).

NAD(+) contacts are provided by residues 10-15 (GAGGRM), Glu-36, 100-102 (GTT), and 124-127 (SGNM). His-157 (proton donor/acceptor) is an active-site residue. Position 158 (His-158) interacts with (S)-2,3,4,5-tetrahydrodipicolinate. Lys-161 functions as the Proton donor in the catalytic mechanism. 167–168 (GT) is a (S)-2,3,4,5-tetrahydrodipicolinate binding site.

It belongs to the DapB family.

Its subcellular location is the cytoplasm. It carries out the reaction (S)-2,3,4,5-tetrahydrodipicolinate + NAD(+) + H2O = (2S,4S)-4-hydroxy-2,3,4,5-tetrahydrodipicolinate + NADH + H(+). It catalyses the reaction (S)-2,3,4,5-tetrahydrodipicolinate + NADP(+) + H2O = (2S,4S)-4-hydroxy-2,3,4,5-tetrahydrodipicolinate + NADPH + H(+). The protein operates within amino-acid biosynthesis; L-lysine biosynthesis via DAP pathway; (S)-tetrahydrodipicolinate from L-aspartate: step 4/4. Catalyzes the conversion of 4-hydroxy-tetrahydrodipicolinate (HTPA) to tetrahydrodipicolinate. This is 4-hydroxy-tetrahydrodipicolinate reductase from Afipia carboxidovorans (strain ATCC 49405 / DSM 1227 / KCTC 32145 / OM5) (Oligotropha carboxidovorans).